Here is a 236-residue protein sequence, read N- to C-terminus: MTLKIGVPSKGRLMEKTFDWFGARGVTMRQTGAEREYSGAVDGVDGVELVLLSAGEIPRELGAGRIHLGVTGSDLVREKLADWSLQVAEMAPLGFGHADLIIAVPAFWIDVDTLDDLDAAAAAFRAAHGFRLRIATKYHRLVREFLMANGVADYQLVDSQGATEGTVKNGTAEAIADITSSGETLRANHLKILSDALVHSSQAVLFASRRADWSEAAGPFAALGARLGLPLPEALT.

It belongs to the ATP phosphoribosyltransferase family. Short subfamily. As to quaternary structure, heteromultimer composed of HisG and HisZ subunits.

It localises to the cytoplasm. The catalysed reaction is 1-(5-phospho-beta-D-ribosyl)-ATP + diphosphate = 5-phospho-alpha-D-ribose 1-diphosphate + ATP. Its pathway is amino-acid biosynthesis; L-histidine biosynthesis; L-histidine from 5-phospho-alpha-D-ribose 1-diphosphate: step 1/9. Functionally, catalyzes the condensation of ATP and 5-phosphoribose 1-diphosphate to form N'-(5'-phosphoribosyl)-ATP (PR-ATP). Has a crucial role in the pathway because the rate of histidine biosynthesis seems to be controlled primarily by regulation of HisG enzymatic activity. In Cereibacter sphaeroides (strain ATCC 17023 / DSM 158 / JCM 6121 / CCUG 31486 / LMG 2827 / NBRC 12203 / NCIMB 8253 / ATH 2.4.1.) (Rhodobacter sphaeroides), this protein is ATP phosphoribosyltransferase (hisG).